Here is a 419-residue protein sequence, read N- to C-terminus: Ribosome biogenesis protein WDR12 homolog (419 aa).

The ubiquitin-like (UBL) domain stretch occupies residues 10–91 (VQVHLKTKQE…EDAIEIEYVE (82 aa)). WD repeat units lie at residues 103–141 (LHDD…LTIP), 142–184 (GHTA…NTVE), 191–230 (GHER…AGEG), 249–287 (GHRE…IKAE), 289–328 (STNK…GSVV), 334–374 (GHNA…APLY), and 378–416 (GHGE…VENM).

This sequence belongs to the WD repeat WDR12/YTM1 family.

Its subcellular location is the nucleus. It is found in the nucleolus. The protein resides in the nucleoplasm. In terms of biological role, required for maturation of ribosomal RNAs and formation of the large ribosomal subunit. This is Ribosome biogenesis protein WDR12 homolog from Drosophila pseudoobscura pseudoobscura (Fruit fly).